Consider the following 863-residue polypeptide: Cilia- and flagella-associated protein 58 (863 aa).

Coiled-coil stretches lie at residues 107 to 600 (TVKE…NERD) and 631 to 815 (QSQY…KQVF). Residues 836–863 (GPSLLDQLPGGSGTGSGGMATGGGVGMS) form a disordered region. A compositionally biased stretch (gly residues) spans 845–863 (GGSGTGSGGMATGGGVGMS).

Belongs to the CFAP58 family.

The protein localises to the cell projection. Its subcellular location is the cilium. It is found in the flagellum. The polypeptide is Cilia- and flagella-associated protein 58 (Chlamydomonas reinhardtii (Chlamydomonas smithii)).